We begin with the raw amino-acid sequence, 546 residues long: EH domain-containing protein 2 (546 aa).

EF-hand domains lie at 15-50 and 51-84; these read EHQKIYKEWFNIADSDGDGRVSGNDATKFFAMSKLS and RQELKQVWAVADSKRQGFLGLSEFITAMKLVSLA. The EH domain maps to 16–94; that stretch reads HQKIYKEWFN…QEGHEITSDL (79 aa). Ca(2+)-binding residues include aspartate 28, aspartate 30, aspartate 32, arginine 34, aspartate 39, aspartate 62, and glutamate 73. One can recognise a Dynamin-type G domain in the interval 194–430; it reads FDAKPMVMLL…LLADLMDVPK (237 aa). Residues 204-211 are G1 motif; that stretch reads GQYSTGKT. A GTP-binding site is contributed by 204–211; the sequence is GQYSTGKT. The G2 motif stretch occupies residues 230–231; that stretch reads EP. The G3 motif stretch occupies residues 292-295; it reads DTPG. Residues 292 to 296 and lysine 359 each bind GTP; that span reads DTPGV. The segment at 358-361 is G4 motif; the sequence is NKAD. Position 382 (valine 382) is a region of interest, G5 motif. 395–398 is a GTP binding site; sequence SFND. Positions 429 to 436 match the Nuclear localization signal motif; that stretch reads PKKACDRK. Residues 467-490 are a coiled coil; the sequence is KSKAQQRLMDNLEEEFGKVQREFH.

It belongs to the TRAFAC class dynamin-like GTPase superfamily. Dynamin/Fzo/YdjA family. EHD subfamily. As to quaternary structure, homooligomer, and heterooligomer with EHD1. Interacts with AP-4 complex subunit sigma (At2g19790).

It localises to the endosome membrane. The protein localises to the cell membrane. The protein resides in the nucleus. Its subcellular location is the cytoplasm. It carries out the reaction GTP + H2O = GDP + phosphate + H(+). Involved in endocytosis negative regulation, probably by influencing actin organization. Acts in early endocytic membrane fusion and membrane trafficking of recycling endosomes. Exhibits an inhibitory effect on endocytosis when over-expressed. The protein is EH domain-containing protein 2 of Arabidopsis thaliana (Mouse-ear cress).